The following is a 198-amino-acid chain: Recombination protein RecR (198 aa).

The C4-type zinc finger occupies 57-72 (CPVCFNITDAERCDVC). Residues 80–173 (NLICVVEEPG…VVSRIAYGLP (94 aa)) form the Toprim domain.

It belongs to the RecR family.

Its function is as follows. May play a role in DNA repair. It seems to be involved in an RecBC-independent recombinational process of DNA repair. It may act with RecF and RecO. This Deinococcus deserti (strain DSM 17065 / CIP 109153 / LMG 22923 / VCD115) protein is Recombination protein RecR.